A 259-amino-acid polypeptide reads, in one-letter code: AM-toxin biosynthesis protein 11 (259 aa).

The tract at residues 39–66 (RRSRRRPEEESIQSLSKHVSTTTQPCPT) is disordered. Residues 50–64 (IQSLSKHVSTTTQPC) show a composition bias toward polar residues.

It functions in the pathway mycotoxin biosynthesis. In terms of biological role, part of the gene clusters that mediate the biosynthesis of AM-toxins, host-selective toxins (HSTs) causing Alternaria blotch on apple, a worldwide distributed disease. AM-toxins are cyclic depsipeptides containing the 3 residues 2-hydroxy-isovaleric acid (2-HIV), dehydroalanine, L-alanine which are common for all 3 AM-toxins I to III. The fourth precursor is L-alpha-amino-methoxyphenyl-valeric acid (L-Amv) for AM-toxin I, L-alpha-amino-phenyl-valeric acid (L-Apv) for AM-toxin II, and L-alpha-amino-hydroxyphenyl-valeric acid (L-Ahv) for AM-toxin III. AM-toxins have two target sites for affecting susceptible apple cells; they cause invagination of the plasma membrane and electrolyte loss and chloroplast disorganization. The non-ribosomal peptide synthetase AMT1 contains 4 catalytic modules and is responsible for activation of each residue in AM-toxin. The aldo-keto reductase AMT2 catalyzes the conversion of 2-keto-isovaleric acid (2-KIV) to 2-hydroxy-isovaleric acid (2-HIV), one of the precursor residues incorporated by AMT1 during AM-toxin biosynthesis, by reduction of its ketone to an alcohol. The cytochrome P450 monooxygenase AMT3 and the thioesterase AMT4 are also important for AM-toxin production, but their exact function within the AM-toxin biosynthesis are not known yet. Up to 21 proteins (including AMT1 to AMT4) are predicted to be involved in AM-toxin biosynthesis since their expression ishighly up-regulated in AM-toxin-producing cultures. This Alternaria alternata (Alternaria rot fungus) protein is AM-toxin biosynthesis protein 11.